Reading from the N-terminus, the 150-residue chain is uncharacterized protein (150 aa).

The protein belongs to the Dps family.

This is an uncharacterized protein from Kitasatospora aureofaciens (Streptomyces aureofaciens).